Consider the following 43-residue polypeptide: Protein PsbN (43 aa).

Residues 5–27 form a helical membrane-spanning segment; sequence TLVAISISCLLVSFTGYALYTAF.

It belongs to the PsbN family.

The protein localises to the plastid. The protein resides in the chloroplast thylakoid membrane. Its function is as follows. May play a role in photosystem I and II biogenesis. This chain is Protein PsbN, found in Cedrus deodara (Deodar cedar).